A 386-amino-acid polypeptide reads, in one-letter code: Putative acid--amine ligase YgiC (386 aa).

Residue 100–102 (RLD) participates in ATP binding. Positions 102, 115, and 117 each coordinate Mg(2+). ATP is bound by residues Lys-267, Lys-302, Gly-309, Gln-336, and 371–373 (LIT).

This sequence belongs to the glutathionylspermidine synthase preATP-grasp family.

May be a ligase forming an amide bond. Shows ATPase activity. This chain is Putative acid--amine ligase YgiC (ygiC), found in Escherichia coli O157:H7.